The sequence spans 224 residues: Cytidylate kinase (224 aa).

Residue 11 to 19 coordinates ATP; it reads GPAAAGKST.

Belongs to the cytidylate kinase family. Type 1 subfamily.

It localises to the cytoplasm. It carries out the reaction CMP + ATP = CDP + ADP. The enzyme catalyses dCMP + ATP = dCDP + ADP. The sequence is that of Cytidylate kinase from Listeria monocytogenes serovar 1/2a (strain ATCC BAA-679 / EGD-e).